We begin with the raw amino-acid sequence, 108 residues long: Competence protein ComGC (108 aa).

An N-terminal signal peptide occupies residues 1–13 (MKKMMTFLKKAKV). The tract at residues 14 to 39 (KAFTLVEMLVVLLIISVLFLLFVPNL) is may be involved in polymerization of ComGC. Phe16 bears the N-methylphenylalanine mark. The helical transmembrane segment at 16–36 (FTLVEMLVVLLIISVLFLLFV) threads the bilayer.

Belongs to the ComGC family. The transformation pili are flexible filaments, consisting mainly of the major pilin ComGC and smaller amounts of the minor pilins, including at least ComGD, ComGF and ComGG, and perhaps ComGE. Homodimer. Forms higher-order multimers. Interacts with ComGG; the interaction is probably direct. In terms of processing, undergoes proteolytic cleavage.

The protein localises to the cell membrane. Its subcellular location is the cell surface. It is found in the fimbrium. The protein resides in the secreted. Its function is as follows. Major component of the type IV-like pilus (T4P) that plays a role in transformation. Transformation pili are dynamically extended and retracted, perhaps thereby promoting DNA uptake and transformation. Required for transformation. Required for DNA binding. This is Competence protein ComGC from Streptococcus pneumoniae (strain ATCC BAA-255 / R6).